Consider the following 302-residue polypeptide: Homoserine O-acetyltransferase (302 aa).

C142 acts as the Acyl-thioester intermediate in catalysis. Substrate is bound by residues K163 and S192. H235 functions as the Proton acceptor in the catalytic mechanism. Residue E237 is part of the active site. Residue R249 participates in substrate binding.

The protein belongs to the MetA family.

It is found in the cytoplasm. It carries out the reaction L-homoserine + acetyl-CoA = O-acetyl-L-homoserine + CoA. It functions in the pathway amino-acid biosynthesis; L-methionine biosynthesis via de novo pathway; O-acetyl-L-homoserine from L-homoserine: step 1/1. Transfers an acetyl group from acetyl-CoA to L-homoserine, forming acetyl-L-homoserine. The sequence is that of Homoserine O-acetyltransferase from Geobacillus kaustophilus.